The chain runs to 404 residues: Cysteine desulfurase IscS (404 aa).

Residues 75 to 76, Asn-155, Gln-183, and 203 to 205 contribute to the pyridoxal 5'-phosphate site; these read AT and SAH. N6-(pyridoxal phosphate)lysine is present on Lys-206. Thr-243 lines the pyridoxal 5'-phosphate pocket. Cys-328 acts as the Cysteine persulfide intermediate in catalysis. Cys-328 is a [2Fe-2S] cluster binding site.

The protein belongs to the class-V pyridoxal-phosphate-dependent aminotransferase family. NifS/IscS subfamily. As to quaternary structure, homodimer. Forms a heterotetramer with IscU, interacts with other sulfur acceptors. It depends on pyridoxal 5'-phosphate as a cofactor.

Its subcellular location is the cytoplasm. The catalysed reaction is (sulfur carrier)-H + L-cysteine = (sulfur carrier)-SH + L-alanine. The protein operates within cofactor biosynthesis; iron-sulfur cluster biosynthesis. Master enzyme that delivers sulfur to a number of partners involved in Fe-S cluster assembly, tRNA modification or cofactor biosynthesis. Catalyzes the removal of elemental sulfur atoms from cysteine to produce alanine. Functions as a sulfur delivery protein for Fe-S cluster synthesis onto IscU, an Fe-S scaffold assembly protein, as well as other S acceptor proteins. This Proteus mirabilis (strain HI4320) protein is Cysteine desulfurase IscS.